We begin with the raw amino-acid sequence, 379 residues long: Homoserine O-acetyltransferase (379 aa).

Residues 52–356 (NVVMVLHALT…IRGHDGFLVE (305 aa)) form the AB hydrolase-1 domain. S157 serves as the catalytic Nucleophile. Position 227 (R227) interacts with substrate. Catalysis depends on residues D320 and H350. Substrate is bound at residue D351.

It belongs to the AB hydrolase superfamily. MetX family. Homodimer.

The protein resides in the cytoplasm. The enzyme catalyses L-homoserine + acetyl-CoA = O-acetyl-L-homoserine + CoA. It functions in the pathway amino-acid biosynthesis; L-methionine biosynthesis via de novo pathway; O-acetyl-L-homoserine from L-homoserine: step 1/1. Its function is as follows. Transfers an acetyl group from acetyl-CoA to L-homoserine, forming acetyl-L-homoserine. The polypeptide is Homoserine O-acetyltransferase (Mycobacterium ulcerans (strain Agy99)).